A 387-amino-acid polypeptide reads, in one-letter code: EARP-interacting protein homolog (387 aa).

WD repeat units follow at residues 132–172 (TAHG…SKAV), 182–222 (KGQL…QIYC), 226–266 (AHGQ…DPVK), 270–310 (EHSH…SEPF), and 345–385 (EHED…KYHI).

The protein belongs to the WD repeat EIPR1 family.

This is EARP-interacting protein homolog from Gekko japonicus (Schlegel's Japanese gecko).